The sequence spans 457 residues: Reticulophagy regulator 3 (457 aa).

Residues 1-24 form a disordered region; that stretch reads MAQRVGEEEQGASGLRRRRSGARC. 3 helical membrane passes run 80–100, 165–185, and 186–206; these read FFALTSLRIIFLVAFGLMIII, PGKFCLLACSFLTFLAVLGGY, and IPGVVLSYLLLLFLLLWPLAI. The segment covering 291 to 305 has biased composition (polar residues); it reads ENGTFNLSRGQTPLT. Disordered stretches follow at residues 291–351 and 410–457; these read ENGT…IPST and AYAE…HSHQ. Residues 310 to 326 are compositionally biased toward basic and acidic residues; the sequence is DLDRHSDPEESFARDLP. Acidic residues predominate over residues 428 to 441; sequence LDTDAEADDFELLD. The LIR motif signature appears at 435–440; it reads DDFELL. Over residues 443 to 457 the composition is skewed to polar residues; the sequence is SELSQMDPSSSHSHQ.

Belongs to the RETREG family. Interacts with ATG8 family modifier proteins.

Its subcellular location is the endoplasmic reticulum membrane. Endoplasmic reticulum (ER)-anchored autophagy regulator which exists in an inactive state under basal conditions but is activated following cellular stress. When activated, induces ER fragmentation and mediates ER delivery into lysosomes through sequestration into autophagosomes via interaction with ATG8 family proteins. Promotes ER membrane curvature and ER tubulation required for subsequent ER fragmentation and engulfment into autophagosomes. This is Reticulophagy regulator 3 (retreg3) from Xenopus tropicalis (Western clawed frog).